The primary structure comprises 175 residues: MAAKVYVGNLSWNTTDDSLAHAFSTYGQLTDYIVMKDRETGRSRGFGFVTFATQAEADAAIAALNEQELDGRRIRVNMANSRPAGGMGGGYGGVTGQYGANAYGAQGGYGGYGGQPGGFQQPGGFQQQGGYPQQGGYGGYQQPGFQPQQGGYGAPQQGYGAPQQGGYGGYNGQSQ.

Positions A3 to S81 constitute an RRM domain. Residues G114 to Q175 are disordered. Positions P122–Y131 are enriched in low complexity. The span at P132–Q141 shows a compositional bias: gly residues. Over residues Q142–P162 the composition is skewed to low complexity. Residues Q163–Q175 are compositionally biased toward gly residues.

This sequence belongs to the glycine-rich RNA-binding protein family. As to quaternary structure, part of large ribonucleoprotein complexes (mRNPs) containing RNA-binding proteins RRM4 and PAB1, endosome-binding protein UPA1, core scaffold protein UPA2 and associated factor GRP1.

It localises to the endosome. Its function is as follows. Component of endosomal mRNA transport that regulates polarity of the infectious hyphae by transporting a broad spectrum of cargo mRNAs from the nucleus to cell poles. This Mycosarcoma maydis (Corn smut fungus) protein is Glycine-rich RNA-binding protein 1.